A 438-amino-acid polypeptide reads, in one-letter code: MGNIHTTGPNEALIVSGGCCGSTKKRTIVGGWAWAWWLVTDVQRLSLNVMTLNPMCENVETSQGVPLTVTGVAQCKIMKSSSYKQTDYHNDEADELLGTASEQFLGKSVKEIKQTILQTLEGHLRAILGTLTVEEVYKDRDQFAALVREVAAPDVGRMGIEILSFTIKDVYDDVQYLASLGKAQTAVVKRDADAGVAEANRDAGIREAECEKSAMDVKYSTDTKIEDNTRMYKLQKANFDQEINTAKAESQLAYELQAAKIRQRIRNEEIQIEVVERRKQIEIESQEVQRKDRELTGTVKLPAEAEAFRLQTLAQAKQCQTIEGARAEAERIRKIGSAEAHAIELVGKAEAERMRMKAHVYKQYGDAAIMNIVLESLPKIAAEVAAPLAKTDEIVLIGGNDNITNDVTRLVAQLPPSINALTGVDLSKVLSKIPGAKA.

It belongs to the band 7/mec-2 family. Flotillin subfamily. Heterooligomeric complex of flotillins 1 and 2.

It is found in the membrane. May play a role in axon growth and regeneration. May be involved in epidermal cell adhesion and epidermal structure and function. The polypeptide is Flotillin-2 (Drosophila melanogaster (Fruit fly)).